Reading from the N-terminus, the 154-residue chain is 3-hydroxyacyl-[acyl-carrier-protein] dehydratase FabZ (154 aa).

The active site involves histidine 54.

Belongs to the thioester dehydratase family. FabZ subfamily.

The protein localises to the cytoplasm. It carries out the reaction a (3R)-hydroxyacyl-[ACP] = a (2E)-enoyl-[ACP] + H2O. In terms of biological role, involved in unsaturated fatty acids biosynthesis. Catalyzes the dehydration of short chain beta-hydroxyacyl-ACPs and long chain saturated and unsaturated beta-hydroxyacyl-ACPs. The polypeptide is 3-hydroxyacyl-[acyl-carrier-protein] dehydratase FabZ (Shewanella baltica (strain OS223)).